We begin with the raw amino-acid sequence, 512 residues long: Photosystem II CP47 reaction center protein (512 aa).

The next 6 helical transmembrane spans lie at 21 to 36 (AVHL…WAGS), 101 to 115 (IVLS…IWHW), 140 to 156 (GIHL…FGAF), 203 to 218 (IAAG…FHLS), 237 to 252 (VLSS…AFVV), and 457 to 472 (TFAL…HGAR).

Belongs to the PsbB/PsbC family. PsbB subfamily. PSII is composed of 1 copy each of membrane proteins PsbA, PsbB, PsbC, PsbD, PsbE, PsbF, PsbH, PsbI, PsbJ, PsbK, PsbL, PsbM, PsbT, PsbX, PsbY, PsbZ, Psb30/Ycf12, at least 3 peripheral proteins of the oxygen-evolving complex and a large number of cofactors. It forms dimeric complexes. Requires Binds multiple chlorophylls. PSII binds additional chlorophylls, carotenoids and specific lipids. as cofactor.

It localises to the plastid. It is found in the chloroplast thylakoid membrane. One of the components of the core complex of photosystem II (PSII). It binds chlorophyll and helps catalyze the primary light-induced photochemical processes of PSII. PSII is a light-driven water:plastoquinone oxidoreductase, using light energy to abstract electrons from H(2)O, generating O(2) and a proton gradient subsequently used for ATP formation. In Physcomitrium patens (Spreading-leaved earth moss), this protein is Photosystem II CP47 reaction center protein.